We begin with the raw amino-acid sequence, 298 residues long: Peroxisomal 2,4-dienoyl-CoA reductase [(3E)-enoyl-CoA-producing] (298 aa).

19 to 24 (GGGSGI) serves as a coordination point for NADP(+). A substrate-binding site is contributed by Arg44. NADP(+) is bound at residue Asp69. Substrate is bound by residues Arg71, Phe101, and 109–111 (SPN). Residues Lys173 and 200–206 (PGPIGGT) contribute to the NADP(+) site. The tract at residues 279–298 (SRAVEKRSRAKPVGLPTSKL) is disordered. The Microbody targeting signal signature appears at 296–298 (SKL).

The protein belongs to the short-chain dehydrogenases/reductases (SDR) family. 2,4-dienoyl-CoA reductase subfamily.

Its subcellular location is the peroxisome. The catalysed reaction is a (2E,4Z)-dienoyl-CoA + NADPH + H(+) = a 4,5-saturated-(3E)-enoyl-CoA + NADP(+). It catalyses the reaction a (2E,4E)-dienoyl-CoA + NADPH + H(+) = a 4,5-saturated-(3E)-enoyl-CoA + NADP(+). Functionally, auxiliary enzyme of beta-oxidation. Participates in the degradation of unsaturated fatty enoyl-CoA esters having double bonds in both even- and odd-numbered positions in peroxisome. Catalyzes the NADP-dependent reduction of 2,4-dienoyl-CoA to yield trans-3-enoyl-CoA. The sequence is that of Peroxisomal 2,4-dienoyl-CoA reductase [(3E)-enoyl-CoA-producing] from Arabidopsis thaliana (Mouse-ear cress).